The chain runs to 250 residues: Cholesterol ring-cleaving hydrolase IpdB subunit (250 aa).

Belongs to the 3-oxoacid CoA-transferase subunit B family. In terms of assembly, heterotetramer composed of 2 IpdA subunits and 2 IpdB subunits.

The catalysed reaction is (3E)-2-(2-carboxylatoethyl)-3-methyl-6-oxocyclohex-1-ene-1-carboxyl-CoA + H2O = 6-methyl-3,7-dioxodecanedioyl-CoA. Its pathway is steroid metabolism; cholesterol degradation. Its function is as follows. Involved in the final steps of cholesterol and steroid degradation. Opens the last steroid ring of cholesterol by catalyzing the hydrolysis of (3E)-2-(2-carboxylatoethyl)-3-methyl-6-oxocyclohex-1-ene-1-carboxyl-CoA (COCHEA-CoA) to 6-methyl-3,7-dioxodecanedioyl-CoA (MeDODA-CoA). This chain is Cholesterol ring-cleaving hydrolase IpdB subunit, found in Mycobacterium bovis (strain ATCC BAA-935 / AF2122/97).